We begin with the raw amino-acid sequence, 361 residues long: Palmitoyltransferase ZDHHC2 (361 aa).

Over 1 to 15 the chain is Cytoplasmic; it reads MAPSGSRSFDCWRVL. Residues 16 to 36 traverse the membrane as a helical segment; that stretch reads YWIPVLFISLIVAWSYYAYVV. Residues 37–50 are Lumenal-facing; that stretch reads QLCIETIENMGEKT. The chain crosses the membrane as a helical span at residues 51–71; the sequence is VYLLIYHLLFLMFVWSYWQTI. At 72 to 167 the chain is on the cytoplasmic side; it reads YSKPMNPLKE…NNCVGFANYK (96 aa). A DHHC domain is found at 124–174; the sequence is RYCDRCLLLKPDRCHHCSACDMCILKMDHHCPWVNNCVGFANYKFFMLFLA. The active-site S-palmitoyl cysteine intermediate is the Cys154. The chain crosses the membrane as a helical span at residues 168 to 188; sequence FFMLFLAYSLLYCLFVTATDM. Over 189 to 207 the chain is Lumenal; the sequence is QYFIQFWTNGLPDTQAKFH. Residues 208–228 form a helical membrane-spanning segment; the sequence is IMFLFFAASTFSVSLAFLFAY. Residues 229–361 lie on the Cytoplasmic side of the membrane; it reads HCWLVCKNRS…NPALTIEKET (133 aa). The segment at 296-361 is mediates localization to plasma membrane and recycling endosomes; that stretch reads NPDPEQPSIP…NPALTIEKET (66 aa). Over residues 299–308 the composition is skewed to pro residues; it reads PEQPSIPPGR. Positions 299-361 are disordered; the sequence is PEQPSIPPGR…NPALTIEKET (63 aa). Residues 331–340 show a composition bias toward polar residues; it reads SRLLNNGQTD. Residues 333–334 carry the Non-canonical dileucine endocytic signal motif; the sequence is LL. Residues 352–355 carry the NPxY-like endocytic signal motif; sequence NPAL.

This sequence belongs to the DHHC palmitoyltransferase family. In terms of assembly, monomer. Homodimer. The monomeric form has a higher catalytic activity. Autopalmitoylated.

The protein localises to the endoplasmic reticulum membrane. The protein resides in the golgi apparatus membrane. Its subcellular location is the postsynaptic density. It is found in the postsynaptic recycling endosome membrane. It localises to the cell membrane. It carries out the reaction L-cysteinyl-[protein] + hexadecanoyl-CoA = S-hexadecanoyl-L-cysteinyl-[protein] + CoA. It catalyses the reaction L-cysteinyl-[protein] + tetradecanoyl-CoA = S-tetradecanoyl-L-cysteinyl-[protein] + CoA. The catalysed reaction is L-cysteinyl-[protein] + octadecanoyl-CoA = S-octadecanoyl-L-cysteinyl-[protein] + CoA. In terms of biological role, palmitoyltransferase that catalyzes the addition of palmitate onto various protein substrates and is involved in a variety of cellular processes. Has no stringent fatty acid selectivity and in addition to palmitate can also transfer onto target proteins myristate from tetradecanoyl-CoA and stearate from octadecanoyl-CoA. The protein is Palmitoyltransferase ZDHHC2 of Danio rerio (Zebrafish).